The chain runs to 195 residues: Thymidylate kinase (195 aa).

7 to 14 contributes to the ATP binding site; the sequence is GIDGVGKS.

This sequence belongs to the thymidylate kinase family.

It catalyses the reaction dTMP + ATP = dTDP + ADP. Phosphorylation of dTMP to form dTDP in both de novo and salvage pathways of dTTP synthesis. The polypeptide is Thymidylate kinase (Campylobacter concisus (strain 13826)).